We begin with the raw amino-acid sequence, 420 residues long: Glutamyl-tRNA reductase (420 aa).

Substrate is bound by residues 49–52 (TCNR), Ser-107, 112–114 (EPQ), and Gln-118. Cys-50 serves as the catalytic Nucleophile. 187–192 (GAGETI) is an NADP(+) binding site.

The protein belongs to the glutamyl-tRNA reductase family. As to quaternary structure, homodimer.

It carries out the reaction (S)-4-amino-5-oxopentanoate + tRNA(Glu) + NADP(+) = L-glutamyl-tRNA(Glu) + NADPH + H(+). It participates in porphyrin-containing compound metabolism; protoporphyrin-IX biosynthesis; 5-aminolevulinate from L-glutamyl-tRNA(Glu): step 1/2. Its function is as follows. Catalyzes the NADPH-dependent reduction of glutamyl-tRNA(Glu) to glutamate 1-semialdehyde (GSA). In Methylococcus capsulatus (strain ATCC 33009 / NCIMB 11132 / Bath), this protein is Glutamyl-tRNA reductase.